The sequence spans 274 residues: Large ribosomal subunit protein uL2 (274 aa).

2 disordered regions span residues 35 to 60 (EPQH…GHKH) and 224 to 274 (VMNP…RRKK). Positions 50 to 60 (TTRHKGGGHKH) are enriched in basic residues. Residues 229 to 246 (DHPHGGGEGKTGEGRHAV) are compositionally biased toward basic and acidic residues.

Belongs to the universal ribosomal protein uL2 family. Part of the 50S ribosomal subunit. Forms a bridge to the 30S subunit in the 70S ribosome.

Functionally, one of the primary rRNA binding proteins. Required for association of the 30S and 50S subunits to form the 70S ribosome, for tRNA binding and peptide bond formation. It has been suggested to have peptidyltransferase activity; this is somewhat controversial. Makes several contacts with the 16S rRNA in the 70S ribosome. This Delftia acidovorans (strain DSM 14801 / SPH-1) protein is Large ribosomal subunit protein uL2.